A 268-amino-acid chain; its full sequence is tRNA pseudouridine synthase A (268 aa).

Aspartate 52 serves as the catalytic Nucleophile. Position 113 (tyrosine 113) interacts with substrate.

The protein belongs to the tRNA pseudouridine synthase TruA family. In terms of assembly, homodimer.

It carries out the reaction uridine(38/39/40) in tRNA = pseudouridine(38/39/40) in tRNA. Formation of pseudouridine at positions 38, 39 and 40 in the anticodon stem and loop of transfer RNAs. This Rhizobium leguminosarum bv. trifolii (strain WSM2304) protein is tRNA pseudouridine synthase A.